Consider the following 152-residue polypeptide: Interleukin-1 family member 10 (152 aa).

The protein belongs to the IL-1 family. In terms of assembly, interacts with cargo receptor TMED10; the interaction mediates the translocation from the cytoplasm into the ERGIC (endoplasmic reticulum-Golgi intermediate compartment) and thereby secretion.

The protein resides in the cytoplasm. Its subcellular location is the endoplasmic reticulum-Golgi intermediate compartment. It localises to the secreted. In terms of biological role, cytokine with immunomodulatory activity. Alone, does not induce cytokine production, but reduces IL22 and IL17A production by T-cells in response to heat-killed Candida albicans. Reduces IL36G-induced production of IL8 by peripheral blood mononuclear cells. Increases IL6 production by dendritic cells stimulated by bacterial lipopolysaccharides (LPS). Ligand for IL-36R/IL1RL2. The sequence is that of Interleukin-1 family member 10 (Il1f10) from Mus musculus (Mouse).